A 202-amino-acid polypeptide reads, in one-letter code: Holliday junction branch migration complex subunit RuvA (202 aa).

The domain I stretch occupies residues 1 to 64 (MIGYLKGQIL…YDGTVLYGFL (64 aa)). The interval 65–146 (TKEDKQLWAI…AVTIAGVPKI (82 aa)) is domain II. The interval 147–155 (KIEGEAPFM) is flexible linker. Residues 155-202 (MSEVMMALTALGYSPMEARKAIDQLYKTGLANDSVENIIRAALRILKK) are domain III.

Belongs to the RuvA family. As to quaternary structure, homotetramer. Forms an RuvA(8)-RuvB(12)-Holliday junction (HJ) complex. HJ DNA is sandwiched between 2 RuvA tetramers; dsDNA enters through RuvA and exits via RuvB. An RuvB hexamer assembles on each DNA strand where it exits the tetramer. Each RuvB hexamer is contacted by two RuvA subunits (via domain III) on 2 adjacent RuvB subunits; this complex drives branch migration. In the full resolvosome a probable DNA-RuvA(4)-RuvB(12)-RuvC(2) complex forms which resolves the HJ.

The protein localises to the cytoplasm. The RuvA-RuvB-RuvC complex processes Holliday junction (HJ) DNA during genetic recombination and DNA repair, while the RuvA-RuvB complex plays an important role in the rescue of blocked DNA replication forks via replication fork reversal (RFR). RuvA specifically binds to HJ cruciform DNA, conferring on it an open structure. The RuvB hexamer acts as an ATP-dependent pump, pulling dsDNA into and through the RuvAB complex. HJ branch migration allows RuvC to scan DNA until it finds its consensus sequence, where it cleaves and resolves the cruciform DNA. The protein is Holliday junction branch migration complex subunit RuvA of Elusimicrobium minutum (strain Pei191).